The sequence spans 299 residues: Large ribosomal subunit protein eL22 (299 aa).

2 disordered regions span residues 1 to 142 and 155 to 178; these read MAPT…AAPA and VAKP…KKNV. 2 stretches are compositionally biased toward basic and acidic residues: residues 33–42 and 55–64; these read GKVEKPKAEA and KASEAAKDVK. 2 stretches are compositionally biased toward low complexity: residues 65-98 and 105-142; these read AAAA…AAAA and AAAA…AAPA.

This sequence belongs to the eukaryotic ribosomal protein eL22 family.

The protein is Large ribosomal subunit protein eL22 (RpL22) of Drosophila melanogaster (Fruit fly).